The following is an 89-amino-acid chain: MSLDTAEKQKLIENHQVHPTDTGSVEVQVAMLSKRISKLSDHLQGNIHDFASRQGLLKMIGKRKRLLSYLKDKNVQKYQELVKKIGIRG.

Basic and acidic residues predominate over residues 1–18 (MSLDTAEKQKLIENHQVH). A disordered region spans residues 1 to 23 (MSLDTAEKQKLIENHQVHPTDTG).

It belongs to the universal ribosomal protein uS15 family. Part of the 30S ribosomal subunit. Forms a bridge to the 50S subunit in the 70S ribosome, contacting the 23S rRNA.

Functionally, one of the primary rRNA binding proteins, it binds directly to 16S rRNA where it helps nucleate assembly of the platform of the 30S subunit by binding and bridging several RNA helices of the 16S rRNA. In terms of biological role, forms an intersubunit bridge (bridge B4) with the 23S rRNA of the 50S subunit in the ribosome. This is Small ribosomal subunit protein uS15 from Prochlorococcus marinus (strain AS9601).